Reading from the N-terminus, the 32-residue chain is Photosystem II reaction center protein Z (32 aa).

The chain crosses the membrane as a helical span at residues 9–29 (IIFSGSLIWVFLLIIVGFLNY).

Belongs to the PsbZ family. PSII is composed of 1 copy each of membrane proteins PsbA, PsbB, PsbC, PsbD, PsbE, PsbF, PsbH, PsbI, PsbJ, PsbK, PsbL, PsbM, PsbT, PsbY, PsbZ, Psb30/Ycf12, at least 3 peripheral proteins of the oxygen-evolving complex and a large number of cofactors. It forms dimeric complexes.

The protein localises to the plastid. It localises to the chloroplast thylakoid membrane. Its function is as follows. May control the interaction of photosystem II (PSII) cores with the light-harvesting antenna, regulates electron flow through the 2 photosystem reaction centers. PSII is a light-driven water plastoquinone oxidoreductase, using light energy to abstract electrons from H(2)O, generating a proton gradient subsequently used for ATP formation. The chain is Photosystem II reaction center protein Z from Euglena myxocylindracea.